Consider the following 698-residue polypeptide: Polyphosphate kinase (698 aa).

Position 63 (asparagine 63) interacts with ATP. Mg(2+) is bound by residues arginine 390 and arginine 420. Residue histidine 450 is the Phosphohistidine intermediate of the active site. ATP-binding residues include tyrosine 483, arginine 579, and histidine 607.

Belongs to the polyphosphate kinase 1 (PPK1) family. Mg(2+) serves as cofactor. In terms of processing, an intermediate of this reaction is the autophosphorylated ppk in which a phosphate is covalently linked to a histidine residue through a N-P bond.

It catalyses the reaction [phosphate](n) + ATP = [phosphate](n+1) + ADP. Functionally, catalyzes the reversible transfer of the terminal phosphate of ATP to form a long-chain polyphosphate (polyP). The chain is Polyphosphate kinase from Xylella fastidiosa (strain Temecula1 / ATCC 700964).